The sequence spans 124 residues: Large ribosomal subunit protein uL18 (124 aa).

Belongs to the universal ribosomal protein uL18 family. Part of the 50S ribosomal subunit; part of the 5S rRNA/L5/L18/L25 subcomplex. Contacts the 5S and 23S rRNAs.

In terms of biological role, this is one of the proteins that bind and probably mediate the attachment of the 5S RNA into the large ribosomal subunit, where it forms part of the central protuberance. The polypeptide is Large ribosomal subunit protein uL18 (Thermomicrobium roseum (strain ATCC 27502 / DSM 5159 / P-2)).